Consider the following 232-residue polypeptide: Probable anion ABC transporter permease protein HVO_1887 (232 aa).

The ABC transmembrane type-1 domain maps to 16–217; that stretch reads TAVSLYVSTA…ALVLGVNALG (202 aa). 5 consecutive transmembrane segments (helical) span residues 23–43, 55–75, 93–113, 146–166, and 198–218; these read STAAVALSAALGLPISLAVGF, VISTGMGFPSVVVGLVVLLVL, MILSQTILALPVLVSVSLSAV, IVTALLAAYGRAISEVGSVLI, and TGIALGAILLALVLGVNALGA.

It belongs to the binding-protein-dependent transport system permease family. The complex is composed of two ATP-binding proteins (HVO_1886), two transmembrane proteins (HVO_1887) and a solute-binding protein (HVO_1888).

The protein resides in the cell membrane. Part of an ABC transporter complex involved in anions import. Responsible for the translocation of the substrate across the membrane. The chain is Probable anion ABC transporter permease protein HVO_1887 from Haloferax volcanii (strain ATCC 29605 / DSM 3757 / JCM 8879 / NBRC 14742 / NCIMB 2012 / VKM B-1768 / DS2) (Halobacterium volcanii).